Here is a 269-residue protein sequence, read N- to C-terminus: 2-dehydro-3-deoxyphosphooctonate aldolase (269 aa).

The protein belongs to the KdsA family.

It localises to the cytoplasm. The catalysed reaction is D-arabinose 5-phosphate + phosphoenolpyruvate + H2O = 3-deoxy-alpha-D-manno-2-octulosonate-8-phosphate + phosphate. Its pathway is carbohydrate biosynthesis; 3-deoxy-D-manno-octulosonate biosynthesis; 3-deoxy-D-manno-octulosonate from D-ribulose 5-phosphate: step 2/3. It participates in bacterial outer membrane biogenesis; lipopolysaccharide biosynthesis. The sequence is that of 2-dehydro-3-deoxyphosphooctonate aldolase from Chlamydia caviae (strain ATCC VR-813 / DSM 19441 / 03DC25 / GPIC) (Chlamydophila caviae).